The chain runs to 247 residues: MKMRAVAVFTGMLTGVLSVAGLLSAGAYAAGGEGNMSASATETNARVFSLHLGATRVVYNPASSGETLTVINDQDYPMLVQSEVLSEDQKSPAPFVVTPPLFRLDGQQSSRLRIVRTGGEFPPDRESLQWICVKGIPPKEGDRWAEGKDGEKKADKVSLNVQLSVSSCIKLFVRPPAVKGRPDDVAGKVEWQRAGNRLKGVNPTPFYINLSTLTVGGKEVKEREYIAPFSSREYPLPAGHRVRFSGR.

A signal peptide spans 1-29 (MKMRAVAVFTGMLTGVLSVAGLLSAGAYA).

It belongs to the periplasmic pilus chaperone family.

Its subcellular location is the periplasm. Functionally, involved in the biogenesis of the AFA-III afimbrial adhesin. This is Chaperone protein AfaB (afaB) from Escherichia coli.